Reading from the N-terminus, the 345-residue chain is MLLSLKAATVRFGGRAVLDAVDLDVAEHETVCVLGPSGSGKSTLLRAVAGLQPLDEGQVVLGGRAMDSVPPHKRGVGLMFQDHQLFPQRDVGGNVAFGLRMHGASRSEQEGRVRELLDLVGLPGAARRAVASLSGGEQQRVALARALAPRPRLLMLDEPLGQLDRSLRERLVVELRELFTELGTTVLAVTHDQGEAFALADRVVVMRAGRIAQSGTPLEVWRQPADEFVARFLGFDNVVGATVAGEAADTPWGKVPVPEGSPQGPGTLLVRPAGVRLADATEGLRCTVAARTFRGTHVAVHLQPEDDAPRLEAACALRDAPEPGETVGVAFDVADIVVLGGASGA.

Residues 3-233 (LSLKAATVRF…PADEFVARFL (231 aa)) enclose the ABC transporter domain. Residue 35-42 (GPSGSGKS) coordinates ATP.

Belongs to the ABC transporter superfamily. Fe(3+) ion importer (TC 3.A.1.10) family. In terms of assembly, the complex is composed of two ATP-binding proteins (FbpC), two transmembrane proteins (FbpB) and a solute-binding protein (FbpA).

The protein localises to the cell membrane. The enzyme catalyses Fe(3+)(out) + ATP + H2O = Fe(3+)(in) + ADP + phosphate + H(+). In terms of biological role, part of the ABC transporter complex FbpABC involved in Fe(3+) ions import. Responsible for energy coupling to the transport system. The chain is Fe(3+) ions import ATP-binding protein FbpC from Streptomyces avermitilis (strain ATCC 31267 / DSM 46492 / JCM 5070 / NBRC 14893 / NCIMB 12804 / NRRL 8165 / MA-4680).